A 133-amino-acid polypeptide reads, in one-letter code: ATP synthase epsilon chain, sodium ion specific (133 aa).

The protein belongs to the ATPase epsilon chain family. As to quaternary structure, F-type ATPases have 2 components, CF(1) - the catalytic core - and CF(0) - the membrane proton channel. CF(1) has five subunits: alpha(3), beta(3), gamma(1), delta(1), epsilon(1). CF(0) has three main subunits: a, b and c.

The protein localises to the cell membrane. Its activity is regulated as follows. Inhibited by nitrate. Functionally, produces ATP from ADP in the presence of a sodium gradient across the membrane. The chain is ATP synthase epsilon chain, sodium ion specific (atpC) from Acetobacterium woodii (strain ATCC 29683 / DSM 1030 / JCM 2381 / KCTC 1655 / WB1).